We begin with the raw amino-acid sequence, 247 residues long: Putative methyltransferase GWCH70_2453 (247 aa).

Belongs to the methyltransferase superfamily.

Its function is as follows. May be a S-adenosyl-L-methionine (SAM)-dependent methyltransferase. The chain is Putative methyltransferase GWCH70_2453 from Geobacillus sp. (strain WCH70).